Consider the following 533-residue polypeptide: (E)-beta-farnesene synthase (533 aa).

The Mg(2+) site is built by aspartate 286 and aspartate 290. Substrate-binding residues include aspartate 286, aspartate 290, arginine 427, and asparagine 430. The short motif at 286–290 is the DDXXD motif element; it reads DDMMD. Mg(2+) is bound by residues asparagine 430 and glutamate 438.

Belongs to the terpene synthase family. As to quaternary structure, monomer. Requires Mg(2+) as cofactor. Mn(2+) is required as a cofactor.

Its subcellular location is the cytoplasm. The enzyme catalyses (2E,6E)-farnesyl diphosphate = (E)-beta-farnesene + diphosphate. The catalysed reaction is (2E,6E)-farnesyl diphosphate = alpha-copaene + diphosphate. It catalyses the reaction (2E,6E)-farnesyl diphosphate = (1S,5S,6R)-alpha-bergamotene + diphosphate. It carries out the reaction (2E,6E)-farnesyl diphosphate = (-)-(E)-beta-caryophyllene + diphosphate. The enzyme catalyses (2E,6E)-farnesyl diphosphate = delta-cadinene + diphosphate. The catalysed reaction is (2E,6E)-farnesyl diphosphate = (+)-germacrene D + diphosphate. It catalyses the reaction (2E,6E)-farnesyl diphosphate = alpha-zingiberene + diphosphate. It carries out the reaction (2E,6E)-farnesyl diphosphate = alpha-muurolene + diphosphate. The enzyme catalyses (2E,6E)-farnesyl diphosphate = (S)-beta-bisabolene + diphosphate. The catalysed reaction is (2E,6E)-farnesyl diphosphate = beta-sesquiphellandrene + diphosphate. It catalyses the reaction (2E,6E)-farnesyl diphosphate = sesquisabinene A + diphosphate. The protein operates within secondary metabolite biosynthesis; terpenoid biosynthesis. Sesquiterpene cyclase catalyzing mainly the production of beta-farnesene and alpha-bergamotene in equal amounts from farnesyl diphosphate. Also mediates the biosynthesis of minor sesquiterpene hydrocarbons including alpha-muurolene, beta-bisabolene, zingiberene, sesquiphellandrene, sesquisabinene A, germacrene D, delta-cadinene, alpha-copaene and (E)-beta-caryophyllene. Involved in indirect defense by producing volatile signals attracting natural enemies of herbivores. The protein is (E)-beta-farnesene synthase of Zea mays (Maize).